We begin with the raw amino-acid sequence, 196 residues long: 7-methyl-GTP pyrophosphatase (196 aa).

Aspartate 72 acts as the Proton acceptor in catalysis.

The protein belongs to the Maf family. YceF subfamily. A divalent metal cation serves as cofactor.

Its subcellular location is the cytoplasm. The catalysed reaction is N(7)-methyl-GTP + H2O = N(7)-methyl-GMP + diphosphate + H(+). In terms of biological role, nucleoside triphosphate pyrophosphatase that hydrolyzes 7-methyl-GTP (m(7)GTP). May have a dual role in cell division arrest and in preventing the incorporation of modified nucleotides into cellular nucleic acids. The chain is 7-methyl-GTP pyrophosphatase from Neisseria gonorrhoeae (strain ATCC 700825 / FA 1090).